Here is a 337-residue protein sequence, read N- to C-terminus: MMEQGVGANTVPGVTAPGNVYMIQARNPVAPGSKGQPVGMATYLTSRVTESDAGRANLQTPRVVIQNPAEVNATQGPPTALQHPTAVASLQTPPGEIQYSLGTTDLQTQPGGPQNPPTCAPGPMYTSNQFQWNMPFGSSFTFDPKKFIKDEVRTLGAIQILIGLTHIFTAINPSLYRQYSYSAISGYLVWGGIFFIISGSLSVEAEKDRSSCMVHGSVGMNVVSAIVSLAGVLLLLVDLIRNPVIDVKTVSGGLLPFVLLEFCLTCVVSHFGCQATCWNQFVNRTEVPTIVIANPANTPTGPFNATYSTTGHVNVITSSANPTSPTNAAAMVPPVPS.

Residues leucine 101–proline 121 form a disordered region. 4 helical membrane-spanning segments follow: residues leucine 155 to leucine 175, alanine 183 to valine 203, methionine 220 to isoleucine 240, and glycine 252 to glycine 272.

It belongs to the MS4A family.

Its subcellular location is the membrane. In Bos taurus (Bovine), this protein is Membrane-spanning 4-domains subfamily A member 18 (MS4A18).